A 60-amino-acid polypeptide reads, in one-letter code: Large ribosomal subunit protein bL32 (60 aa).

Residues 1-16 (MAVPRRKTSPSRRGMR) are compositionally biased toward basic residues. The tract at residues 1–60 (MAVPRRKTSPSRRGMRRSADAIKRPTYVEDKDSGELRRPHHLDLKTGMYKGRQVLKKKDS) is disordered. The segment covering 17-44 (RSADAIKRPTYVEDKDSGELRRPHHLDL) has biased composition (basic and acidic residues).

The chain is Large ribosomal subunit protein bL32 from Rhodopseudomonas palustris (strain ATCC BAA-98 / CGA009).